The sequence spans 73 residues: Defensin-like protein 34 (73 aa).

An N-terminal signal peptide occupies residues 1–25 (MASNKVSFFLVLCLCVLSTAEFGEA). 3 disulfide bridges follow: C33/C59, C45/C68, and C49/C70.

Belongs to the DEFL family.

Its subcellular location is the secreted. This chain is Defensin-like protein 34, found in Arabidopsis thaliana (Mouse-ear cress).